A 475-amino-acid polypeptide reads, in one-letter code: Aspartyl/glutamyl-tRNA(Asn/Gln) amidotransferase subunit B (475 aa).

The protein belongs to the GatB/GatE family. GatB subfamily. In terms of assembly, heterotrimer of A, B and C subunits.

It carries out the reaction L-glutamyl-tRNA(Gln) + L-glutamine + ATP + H2O = L-glutaminyl-tRNA(Gln) + L-glutamate + ADP + phosphate + H(+). It catalyses the reaction L-aspartyl-tRNA(Asn) + L-glutamine + ATP + H2O = L-asparaginyl-tRNA(Asn) + L-glutamate + ADP + phosphate + 2 H(+). Functionally, allows the formation of correctly charged Asn-tRNA(Asn) or Gln-tRNA(Gln) through the transamidation of misacylated Asp-tRNA(Asn) or Glu-tRNA(Gln) in organisms which lack either or both of asparaginyl-tRNA or glutaminyl-tRNA synthetases. The reaction takes place in the presence of glutamine and ATP through an activated phospho-Asp-tRNA(Asn) or phospho-Glu-tRNA(Gln). The sequence is that of Aspartyl/glutamyl-tRNA(Asn/Gln) amidotransferase subunit B from Bacillus cereus (strain ATCC 10987 / NRS 248).